The primary structure comprises 329 residues: Malate dehydrogenase (329 aa).

12 to 18 provides a ligand contact to NAD(+); that stretch reads GAAGQIG. Substrate is bound by residues Arg93 and Arg99. NAD(+) is bound by residues Asn106, Gln113, and 130–132; that span reads TGN. Substrate contacts are provided by Asn132 and Arg163. Catalysis depends on His188, which acts as the Proton acceptor.

This sequence belongs to the LDH/MDH superfamily. MDH type 2 family.

The catalysed reaction is (S)-malate + NAD(+) = oxaloacetate + NADH + H(+). Functionally, catalyzes the reversible oxidation of malate to oxaloacetate. The polypeptide is Malate dehydrogenase (Mycobacterium ulcerans (strain Agy99)).